The primary structure comprises 197 residues: Isochorismatase domain-containing protein 2 (197 aa).

Belongs to the isochorismatase family.

The chain is Isochorismatase domain-containing protein 2 (isoc2) from Danio rerio (Zebrafish).